The chain runs to 248 residues: NH(3)-dependent NAD(+) synthetase (248 aa).

31–38 (GVSGGVDS) serves as a coordination point for ATP. Asp37 is a binding site for Mg(2+). Arg114 contributes to the deamido-NAD(+) binding site. Thr134 is an ATP binding site. Glu139 lines the Mg(2+) pocket. Residues Lys147 and Asp154 each coordinate deamido-NAD(+). The ATP site is built by Lys163 and Ser185. 236-237 (HK) contributes to the deamido-NAD(+) binding site.

It belongs to the NAD synthetase family. Homodimer.

It carries out the reaction deamido-NAD(+) + NH4(+) + ATP = AMP + diphosphate + NAD(+) + H(+). It functions in the pathway cofactor biosynthesis; NAD(+) biosynthesis; NAD(+) from deamido-NAD(+) (ammonia route): step 1/1. Functionally, catalyzes the ATP-dependent amidation of deamido-NAD to form NAD. Uses ammonia as a nitrogen source. The polypeptide is NH(3)-dependent NAD(+) synthetase (Methanoregula boonei (strain DSM 21154 / JCM 14090 / 6A8)).